Consider the following 255-residue polypeptide: Electron transfer flavoprotein subunit beta (255 aa).

N-acetylalanine is present on Ala2. Residues Ala9, 39–42, Cys66, and 123–134 contribute to the AMP site; these read NPFC and GKQAIDDDCNQT. Residues 183 to 205 are recognition loop; sequence ADLRLNEPRYATLPNIMKAKKKK. At Lys200 the chain carries N6,N6,N6-trimethyllysine; by ETFBKMT; alternate. The residue at position 200 (Lys200) is an N6-acetyllysine; alternate. Lys200 is subject to N6-methyllysine; alternate. An N6,N6,N6-trimethyllysine; by ETFBKMT modification is found at Lys203. Lys210 carries the post-translational modification N6-acetyllysine; alternate. At Lys210 the chain carries N6-succinyllysine; alternate. A phosphoserine mark is found at Ser223 and Ser226. Residue Lys238 is modified to N6-acetyllysine. An N6-acetyllysine; alternate modification is found at Lys248. N6-succinyllysine; alternate is present on Lys248.

The protein belongs to the ETF beta-subunit/FixA family. In terms of assembly, heterodimer composed of ETFA and ETFB. Identified in a complex that contains ETFA, ETFB and ETFRF1. Interacts with ACADM. Methylated. Trimethylation at Lys-200 and Lys-203 may negatively regulate the activity in electron transfer from acyl-CoA dehydrogenases.

The protein resides in the mitochondrion matrix. Its function is as follows. Heterodimeric electron transfer flavoprotein that accepts electrons from several mitochondrial dehydrogenases, including acyl-CoA dehydrogenases, glutaryl-CoA and sarcosine dehydrogenase. It transfers the electrons to the main mitochondrial respiratory chain via ETF-ubiquinone oxidoreductase. Required for normal mitochondrial fatty acid oxidation and normal amino acid metabolism. ETFB binds an AMP molecule that probably has a purely structural role. This is Electron transfer flavoprotein subunit beta from Bos taurus (Bovine).